A 259-amino-acid polypeptide reads, in one-letter code: MTNTALPTSSADQENDTQLNELHKSQNAVVLLSGGLDSVTCLYWAKARYASVTAVSFDYGQRHNSELIAAKAIAETAGVNHRIIDIDIAQLGGSSLTDHSMIVPDGDTDKFPDKKRDEIDNDAIPNTYVPARNTIFLSYALAVAEVTDSNHIVIGVSSVDYSGYPDCRPEYIAAFQHMANLATKAGVTGHHLSIQTPLQQLSKAKTIELGLSLGVDYGQTISCYQADANGFACGVCDSCALRRQGFAQAGVADPTHYQS.

Residue L32–L42 participates in ATP binding. Zn(2+) is bound by residues C223, C233, C236, and C239.

This sequence belongs to the QueC family. Requires Zn(2+) as cofactor.

It catalyses the reaction 7-carboxy-7-deazaguanine + NH4(+) + ATP = 7-cyano-7-deazaguanine + ADP + phosphate + H2O + H(+). It participates in purine metabolism; 7-cyano-7-deazaguanine biosynthesis. Catalyzes the ATP-dependent conversion of 7-carboxy-7-deazaguanine (CDG) to 7-cyano-7-deazaguanine (preQ(0)). This chain is 7-cyano-7-deazaguanine synthase, found in Psychrobacter arcticus (strain DSM 17307 / VKM B-2377 / 273-4).